Consider the following 355-residue polypeptide: NADH-quinone oxidoreductase subunit H (355 aa).

Transmembrane regions (helical) follow at residues 25-45, 91-111, 126-146, 170-190, 205-225, 253-273, 290-310, and 330-350; these read VVRILVVSVVILLCVAYLILW, WLYLIAPIMTVVPAFAVWAVI, LLYAMAISSIGVYAVILAGWA, MGFALVLVLMTAGSLNLSEIV, FLSWNWLPLLPAFVVYFISGI, MAFALFFLAEYINMIVISALA, FIPGIFWLVLKVFALLSVFIW, and VFLPVTVIWVVVVGCWMMSPL.

The protein belongs to the complex I subunit 1 family. As to quaternary structure, NDH-1 is composed of 14 different subunits. Subunits NuoA, H, J, K, L, M, N constitute the membrane sector of the complex.

The protein localises to the cell inner membrane. The catalysed reaction is a quinone + NADH + 5 H(+)(in) = a quinol + NAD(+) + 4 H(+)(out). Its function is as follows. NDH-1 shuttles electrons from NADH, via FMN and iron-sulfur (Fe-S) centers, to quinones in the respiratory chain. The immediate electron acceptor for the enzyme in this species is believed to be ubiquinone. Couples the redox reaction to proton translocation (for every two electrons transferred, four hydrogen ions are translocated across the cytoplasmic membrane), and thus conserves the redox energy in a proton gradient. This subunit may bind ubiquinone. The sequence is that of NADH-quinone oxidoreductase subunit H from Burkholderia cenocepacia (strain ATCC BAA-245 / DSM 16553 / LMG 16656 / NCTC 13227 / J2315 / CF5610) (Burkholderia cepacia (strain J2315)).